A 226-amino-acid polypeptide reads, in one-letter code: Protein pdh1 (226 aa).

The first 26 residues, 1 to 26 (MNHFSKFSVTKRLLILEVLFSAISFG), serve as a signal peptide directing secretion. Topologically, residues 27-41 (ISIYIKVFGRSSIVT) are extracellular. A helical transmembrane segment spans residues 42-62 (FFLLCFHLVPNALFLFPWTII). The Cytoplasmic portion of the chain corresponds to 63–65 (TTS). A helical transmembrane segment spans residues 66 to 86 (FVDANVFTLLSSILILSVYGV). The Extracellular portion of the chain corresponds to 87 to 97 (EIERSWGHKEY). The helical transmembrane segment at 98–118 (LLFCQFLTVIPNIAVLIPCFI) threads the bilayer. The Cytoplasmic portion of the chain corresponds to 119–191 (AYKITDSHYL…VFQSFPWTYF (73 aa)). Residues 192–212 (CLAVSGTCISELYVLFVHPVV) traverse the membrane as a helical segment. Residues 213–226 (QELFHLESHTQLPI) are Extracellular-facing.

It is found in the membrane. In Schizosaccharomyces pombe (strain 972 / ATCC 24843) (Fission yeast), this protein is Protein pdh1 (pdh1).